The sequence spans 538 residues: Sterol esterase 2 (538 aa).

The Cytoplasmic portion of the chain corresponds to 1–11 (MVNKVVDEVQR). The helical; Signal-anchor for type II membrane protein transmembrane segment at 12-32 (LVSAIILTSFMTGLFILSLWK) threads the bilayer. Residues 33-538 (NYVTVHFQHK…IENLRFPNAR (506 aa)) lie on the Lumenal side of the membrane. Positions 42-87 (KNDPRDTRSSRTKIQPNDKKKKRPARHSRPLSISSTTPLDLQRDQE) are disordered. The segment covering 60-70 (KKKKRPARHSR) has biased composition (basic residues). Residues Ser73 and Ser107 each carry the phosphoserine modification. Ser287 acts as the Nucleophile in catalysis. Catalysis depends on charge relay system residues Asp480 and His511.

This sequence belongs to the AB hydrolase superfamily. In terms of processing, not glycosylated.

It localises to the cell membrane. It catalyses the reaction a sterol ester + H2O = a sterol + a fatty acid + H(+). Mediates the hydrolysis of steryl esters. Required for mobilization of steryl ester, thereby playing a central role in lipid metabolism. In Saccharomyces cerevisiae (strain ATCC 204508 / S288c) (Baker's yeast), this protein is Sterol esterase 2 (YEH2).